The following is a 502-amino-acid chain: Ubiquilin (502 aa).

Positions 8-83 (IKVHVKSPSN…VHLVIRNQAR (76 aa)) constitute a Ubiquitin-like domain. The segment covering 84 to 115 (PTPAPAAATPTASSAPSSNPTPSSQPNPTNNP) has biased composition (low complexity). Residues 84-136 (PTPAPAAATPTASSAPSSNPTPSSQPNPTNNPFAAMGGMGSPADILNNPDAMR) form a disordered region. 2 consecutive STI1 domains span residues 124–157 (SPADILNNPDAMRSVMDNPITQQLLGNPEFMRTI) and 161–200 (NPQFQALIERNPEVGHILNDPNVMRQTMEMIRNPNMFQEM). Residues 235 to 251 (SATNSLSGNPFASLRGD) show a composition bias toward polar residues. The disordered stretch occupies residues 235 to 294 (SATNSLSGNPFASLRGDQSSEPRVDRAGQENNEALPNPWASNANQATNNQSNNRSADFNS). Over residues 252-262 (QSSEPRVDRAG) the composition is skewed to basic and acidic residues. Residues 274-290 (ASNANQATNNQSNNRSA) show a composition bias toward low complexity. STI1 domains lie at 289 to 327 (SADFNSLLDSPGISSLMEQMMSNPSMQASMFSPEVINSI) and 351 to 387 (NPQISEGIRRSFPQMLNMMSDPSVMEAMRNPRVSEAF). The UBA domain occupies 455 to 501 (PVNPEQTYASQLEQLQSMGFSDRARNVAALTATFGDLNAAVERLLNS).

Expressed in the pharynx, hypodermis, intestine and head neurons. Upon ER stress, expressed predominantly in pharyngeal muscle, hypodermis and intestine.

May play a role in the ER-associated protein degradation pathway (ERAD) possibly via its interaction with ER-localized proteins ubxn-4 and cdc-48.1 and/or cdc48.2, providing a link between the polyubiquitinated ERAD substrates and the proteasome. Also plays an important role in the regulation of other protein degradation mechanisms and pathways including ubiquitin-proteasome system (UPS) and autophagy. Mediates the proteasomal targeting of misfolded or accumulated proteins for degradation by binding (via UBA domain) to their polyubiquitin chains and by interacting (via ubiquitin-like domain) with the subunits of the proteasome. Collaborates with POST (F36D4.5) in the export of ubiquitinated proteins from the nucleus to the cytoplasm. Also acts as a regulator of DNA repair by inhibiting homologous recombination repair, thereby redirecting double-strand break repair toward non-homologous end joining (NHEJ). This chain is Ubiquilin, found in Caenorhabditis elegans.